The sequence spans 347 residues: Uroporphyrinogen decarboxylase (347 aa).

Substrate-binding positions include 23–27 (RQAGR), aspartate 73, tyrosine 150, threonine 205, and histidine 323.

This sequence belongs to the uroporphyrinogen decarboxylase family. As to quaternary structure, homodimer.

It is found in the cytoplasm. It catalyses the reaction uroporphyrinogen III + 4 H(+) = coproporphyrinogen III + 4 CO2. It participates in porphyrin-containing compound metabolism; protoporphyrin-IX biosynthesis; coproporphyrinogen-III from 5-aminolevulinate: step 4/4. Its function is as follows. Catalyzes the decarboxylation of four acetate groups of uroporphyrinogen-III to yield coproporphyrinogen-III. The polypeptide is Uroporphyrinogen decarboxylase (Ruthia magnifica subsp. Calyptogena magnifica).